Consider the following 346-residue polypeptide: Holliday junction branch migration complex subunit RuvB (346 aa).

The tract at residues 1-182 (MSERLVTSNE…FGVLCSMEYY (182 aa)) is large ATPase domain (RuvB-L). ATP-binding positions include Leu-21, Arg-22, Gly-63, Lys-66, Thr-67, Thr-68, 129–131 (EDY), Arg-172, Tyr-182, and Arg-219. Residue Thr-67 participates in Mg(2+) binding. Residues 183-253 (TDEQLKEIII…AAKKSLEILE (71 aa)) form a small ATPAse domain (RuvB-S) region. The head domain (RuvB-H) stretch occupies residues 256–346 (GEGFDRIDNK…DSKQCTLFEK (91 aa)). The DNA site is built by Arg-311 and Arg-316.

Belongs to the RuvB family. As to quaternary structure, homohexamer. Forms an RuvA(8)-RuvB(12)-Holliday junction (HJ) complex. HJ DNA is sandwiched between 2 RuvA tetramers; dsDNA enters through RuvA and exits via RuvB. An RuvB hexamer assembles on each DNA strand where it exits the tetramer. Each RuvB hexamer is contacted by two RuvA subunits (via domain III) on 2 adjacent RuvB subunits; this complex drives branch migration. In the full resolvosome a probable DNA-RuvA(4)-RuvB(12)-RuvC(2) complex forms which resolves the HJ.

The protein localises to the cytoplasm. It catalyses the reaction ATP + H2O = ADP + phosphate + H(+). Its function is as follows. The RuvA-RuvB-RuvC complex processes Holliday junction (HJ) DNA during genetic recombination and DNA repair, while the RuvA-RuvB complex plays an important role in the rescue of blocked DNA replication forks via replication fork reversal (RFR). RuvA specifically binds to HJ cruciform DNA, conferring on it an open structure. The RuvB hexamer acts as an ATP-dependent pump, pulling dsDNA into and through the RuvAB complex. RuvB forms 2 homohexamers on either side of HJ DNA bound by 1 or 2 RuvA tetramers; 4 subunits per hexamer contact DNA at a time. Coordinated motions by a converter formed by DNA-disengaged RuvB subunits stimulates ATP hydrolysis and nucleotide exchange. Immobilization of the converter enables RuvB to convert the ATP-contained energy into a lever motion, pulling 2 nucleotides of DNA out of the RuvA tetramer per ATP hydrolyzed, thus driving DNA branch migration. The RuvB motors rotate together with the DNA substrate, which together with the progressing nucleotide cycle form the mechanistic basis for DNA recombination by continuous HJ branch migration. Branch migration allows RuvC to scan DNA until it finds its consensus sequence, where it cleaves and resolves cruciform DNA. The polypeptide is Holliday junction branch migration complex subunit RuvB (Clostridium perfringens (strain ATCC 13124 / DSM 756 / JCM 1290 / NCIMB 6125 / NCTC 8237 / Type A)).